We begin with the raw amino-acid sequence, 192 residues long: Pyruvate kinase (192 aa).

A substrate-binding site is contributed by arginine 41. The K(+) site is built by asparagine 43, serine 45, aspartate 75, and threonine 76. ATP is bound at residue 43–46 (NFSH).

This sequence belongs to the pyruvate kinase family. It depends on Mg(2+) as a cofactor. The cofactor is K(+).

The enzyme catalyses pyruvate + ATP = phosphoenolpyruvate + ADP + H(+). Its pathway is carbohydrate degradation; glycolysis; pyruvate from D-glyceraldehyde 3-phosphate: step 5/5. This chain is Pyruvate kinase (pyk), found in Spiroplasma citri.